We begin with the raw amino-acid sequence, 557 residues long: Formate--tetrahydrofolate ligase (557 aa).

66-73 (TPAGEGKS) provides a ligand contact to ATP.

This sequence belongs to the formate--tetrahydrofolate ligase family.

The enzyme catalyses (6S)-5,6,7,8-tetrahydrofolate + formate + ATP = (6R)-10-formyltetrahydrofolate + ADP + phosphate. It functions in the pathway one-carbon metabolism; tetrahydrofolate interconversion. The sequence is that of Formate--tetrahydrofolate ligase from Lactobacillus johnsonii (strain CNCM I-12250 / La1 / NCC 533).